A 318-amino-acid chain; its full sequence is BES1/BZR1 homolog protein 2 (318 aa).

Gly residues predominate over residues 1 to 13 (MAAGGGGGGGGSS). Disordered regions lie at residues 1 to 34 (MAAG…RRRR), 84 to 133 (FKPP…PSPS), 166 to 195 (NSAP…PNGG), and 209 to 231 (APSS…CDES). The interval 16–97 (RTPTWKEREN…ASDISGTPTN (82 aa)) is required for DNA-binding. The span at 91–101 (ISGTPTNFSTN) shows a compositional bias: polar residues. Over residues 102–133 (SSIQPSPQSSAFPSPAPSYHGSPVSSSFPSPS) the composition is skewed to low complexity.

The protein belongs to the BZR/LAT61 family. Phosphorylated. Phosphorylation increases protein degradation.

This Arabidopsis thaliana (Mouse-ear cress) protein is BES1/BZR1 homolog protein 2 (BEH2).